Consider the following 270-residue polypeptide: Surfeit locus protein 4 homolog (270 aa).

The next 6 membrane-spanning stretches (helical) occupy residues 65–85, 93–113, 115–135, 178–198, 206–226, and 243–263; these read FLAT…CGMV, IAVG…SILW, FQFL…LAEA, LSVW…LVVL, ALIL…WWTI, and TLSV…GVSM. The Di-lysine motif signature appears at 267-270; sequence KKKW.

The protein belongs to the SURF4 family.

Its subcellular location is the endoplasmic reticulum membrane. In terms of biological role, endoplasmic reticulum cargo receptor that mediates the export of lipoproteins by recruiting cargos into COPII vesicles to facilitate their secretion. The polypeptide is Surfeit locus protein 4 homolog (Drosophila melanogaster (Fruit fly)).